The primary structure comprises 337 residues: Glyceraldehyde-3-phosphate dehydrogenase, cytosolic (337 aa).

NAD(+) contacts are provided by residues 13–14 (RI), Asp-35, and Arg-82. Residues 153–155 (SCT), Thr-184, 213–214 (TG), and Arg-236 each bind D-glyceraldehyde 3-phosphate. Residue Cys-154 is the Nucleophile of the active site. Asn-318 contributes to the NAD(+) binding site.

Belongs to the glyceraldehyde-3-phosphate dehydrogenase family. In terms of assembly, homotetramer.

The protein localises to the cytoplasm. The catalysed reaction is D-glyceraldehyde 3-phosphate + phosphate + NAD(+) = (2R)-3-phospho-glyceroyl phosphate + NADH + H(+). It functions in the pathway carbohydrate degradation; glycolysis; pyruvate from D-glyceraldehyde 3-phosphate: step 1/5. Key enzyme in glycolysis that catalyzes the first step of the pathway by converting D-glyceraldehyde 3-phosphate (G3P) into 3-phospho-D-glyceroyl phosphate. Essential for the maintenance of cellular ATP levels and carbohydrate metabolism. This Craterostigma plantagineum (Blue gem) protein is Glyceraldehyde-3-phosphate dehydrogenase, cytosolic (GAPC).